A 403-amino-acid chain; its full sequence is Histidine--tRNA ligase (403 aa).

It belongs to the class-II aminoacyl-tRNA synthetase family. In terms of assembly, homodimer.

The protein localises to the cytoplasm. The catalysed reaction is tRNA(His) + L-histidine + ATP = L-histidyl-tRNA(His) + AMP + diphosphate + H(+). The sequence is that of Histidine--tRNA ligase from Sulfurovum sp. (strain NBC37-1).